A 178-amino-acid polypeptide reads, in one-letter code: Large ribosomal subunit protein uL6 (178 aa).

This sequence belongs to the universal ribosomal protein uL6 family. Part of the 50S ribosomal subunit.

This protein binds to the 23S rRNA, and is important in its secondary structure. It is located near the subunit interface in the base of the L7/L12 stalk, and near the tRNA binding site of the peptidyltransferase center. In Frankia casuarinae (strain DSM 45818 / CECT 9043 / HFP020203 / CcI3), this protein is Large ribosomal subunit protein uL6.